Reading from the N-terminus, the 214-residue chain is Large ribosomal subunit protein uL3 (214 aa).

Glutamine 151 is modified (N5-methylglutamine).

It belongs to the universal ribosomal protein uL3 family. As to quaternary structure, part of the 50S ribosomal subunit. Forms a cluster with proteins L14 and L19. Methylated by PrmB.

One of the primary rRNA binding proteins, it binds directly near the 3'-end of the 23S rRNA, where it nucleates assembly of the 50S subunit. This chain is Large ribosomal subunit protein uL3, found in Magnetococcus marinus (strain ATCC BAA-1437 / JCM 17883 / MC-1).